Consider the following 831-residue polypeptide: Probable inactive serine/threonine-protein kinase DDB_G0274613 (831 aa).

The segment at cysteine 9–arginine 63 adopts an RING-type zinc-finger fold. Residues arginine 83–phenylalanine 348 adopt a coiled-coil conformation. One can recognise a Protein kinase domain in the interval glutamine 414–phenylalanine 787. Residues asparagine 657–asparagine 703 are disordered.

The protein belongs to the protein kinase superfamily. CMGC Ser/Thr protein kinase family.

The protein is Probable inactive serine/threonine-protein kinase DDB_G0274613 of Dictyostelium discoideum (Social amoeba).